Consider the following 696-residue polypeptide: DNA topoisomerase 6 subunit B (696 aa).

Residues methionine 1–lysine 36 are disordered. The span at alanine 20–lysine 36 shows a compositional bias: low complexity. ATP is bound by residues asparagine 88, aspartate 187, threonine 208 to lysine 209, glycine 217 to lysine 224, and lysine 543.

The protein belongs to the TOP6B family. As to quaternary structure, homodimer. Heterotetramer of two TOP6A and two TOP6B subunits. Interacts with SPO11-2 and TOP6A3. Highly expressed in flowers before pollination. Expressed in roots and shoots.

The protein localises to the nucleus. It carries out the reaction ATP-dependent breakage, passage and rejoining of double-stranded DNA.. In terms of biological role, component of the DNA topoisomerase VI involved in chromatin organization and progression of endoreduplication cycles. Relaxes both positive and negative superturns and exhibits a strong decatenase activity. The B subunit binds ATP. May be involved in cell proliferation and stress tolerance. The protein is DNA topoisomerase 6 subunit B of Oryza sativa subsp. indica (Rice).